A 139-amino-acid chain; its full sequence is Crossover junction endodeoxyribonuclease Hje (139 aa).

Mg(2+) is bound by residues Glu-10, Asp-39, and Glu-52.

This sequence belongs to the Holliday junction resolvase Hjc family. Hje subfamily. As to quaternary structure, homodimer. Mg(2+) is required as a cofactor.

The enzyme catalyses Endonucleolytic cleavage at a junction such as a reciprocal single-stranded crossover between two homologous DNA duplexes (Holliday junction).. A structure-specific endonuclease that resolves Holliday junction (HJ) intermediates during genetic recombination. Acts only on 4-way DNA junctions in a sequence non-specific manner; introduces paired nicks in opposing strands 2 bases 3' of the point of strand exchange only on continuous strands of 4-way junction DNA. Cleaves both mobile and immobile junctions. Its function is as follows. Redundant function with Holliday junction resolvase Hjc. The protein is Crossover junction endodeoxyribonuclease Hje of Sulfolobus acidocaldarius (strain ATCC 33909 / DSM 639 / JCM 8929 / NBRC 15157 / NCIMB 11770).